The primary structure comprises 333 residues: Ribosomal RNA small subunit methyltransferase H (333 aa).

Residues 31-33, Asp-49, Phe-76, Asp-134, and Gln-141 contribute to the S-adenosyl-L-methionine site; that span reads GGY.

It belongs to the methyltransferase superfamily. RsmH family.

Its subcellular location is the cytoplasm. The enzyme catalyses cytidine(1402) in 16S rRNA + S-adenosyl-L-methionine = N(4)-methylcytidine(1402) in 16S rRNA + S-adenosyl-L-homocysteine + H(+). Its function is as follows. Specifically methylates the N4 position of cytidine in position 1402 (C1402) of 16S rRNA. In Wolbachia sp. subsp. Brugia malayi (strain TRS), this protein is Ribosomal RNA small subunit methyltransferase H.